The sequence spans 348 residues: Macrophage-capping protein (348 aa).

Position 1 is an N-acetylmethionine (M1). A Gelsolin-like 1 repeat occupies 27-75 (EKLKPVPVAQENQGVFFSGDSYLVLHNGPEEVSHLHLWIGQQSSRDEQG). A Nuclear localization signal motif is present at residues 137–146 (KKLYQVKGKK). Gelsolin-like repeat units follow at residues 148 to 188 (IRAT…LERN) and 261 to 307 (MNLT…KERQ). At S337 the chain carries Phosphoserine.

This sequence belongs to the villin/gelsolin family. In terms of assembly, interacts with NUP62. Interacts with NUTF2 and RAN; involved in CAPG nuclear import. In terms of processing, the N-terminus is blocked. Macrophages and macrophage-like cells.

Its subcellular location is the nucleus. The protein localises to the cytoplasm. It localises to the melanosome. It is found in the cell projection. The protein resides in the lamellipodium. Its subcellular location is the ruffle. Calcium-sensitive protein which reversibly blocks the barbed ends of actin filaments but does not sever preformed actin filaments. May play an important role in macrophage function. May play a role in regulating cytoplasmic and/or nuclear structures through potential interactions with actin. May bind DNA. The protein is Macrophage-capping protein (CAPG) of Homo sapiens (Human).